Consider the following 404-residue polypeptide: Cysteine desulfurase IscS (404 aa).

Residues 75–76 (AT), Asn-155, Gln-183, and 203–205 (SAH) contribute to the pyridoxal 5'-phosphate site. N6-(pyridoxal phosphate)lysine is present on Lys-206. Thr-243 is a pyridoxal 5'-phosphate binding site. Catalysis depends on Cys-328, which acts as the Cysteine persulfide intermediate. Cys-328 serves as a coordination point for [2Fe-2S] cluster.

It belongs to the class-V pyridoxal-phosphate-dependent aminotransferase family. NifS/IscS subfamily. As to quaternary structure, homodimer. Forms a heterotetramer with IscU, interacts with other sulfur acceptors. Requires pyridoxal 5'-phosphate as cofactor.

It localises to the cytoplasm. The enzyme catalyses (sulfur carrier)-H + L-cysteine = (sulfur carrier)-SH + L-alanine. Its pathway is cofactor biosynthesis; iron-sulfur cluster biosynthesis. Master enzyme that delivers sulfur to a number of partners involved in Fe-S cluster assembly, tRNA modification or cofactor biosynthesis. Catalyzes the removal of elemental sulfur atoms from cysteine to produce alanine. Functions as a sulfur delivery protein for Fe-S cluster synthesis onto IscU, an Fe-S scaffold assembly protein, as well as other S acceptor proteins. The protein is Cysteine desulfurase IscS of Ruthia magnifica subsp. Calyptogena magnifica.